Reading from the N-terminus, the 99-residue chain is uncharacterized protein (99 aa).

Residues Ser50–Gln77 are disordered.

This is an uncharacterized protein from Homo sapiens (Human).